Consider the following 916-residue polypeptide: DNA mismatch repair protein MutS (916 aa).

An ATP-binding site is contributed by 665 to 672; that stretch reads GPNMAGKS.

The protein belongs to the DNA mismatch repair MutS family.

In terms of biological role, this protein is involved in the repair of mismatches in DNA. It is possible that it carries out the mismatch recognition step. This protein has a weak ATPase activity. The polypeptide is DNA mismatch repair protein MutS (Bradyrhizobium sp. (strain ORS 278)).